A 191-amino-acid chain; its full sequence is UPF0669 protein C6orf120 homolog (191 aa).

Residues 1-30 form the signal peptide; that stretch reads MAAPRGRAAPWTTALLLLLTSQILSPGSCA. N-linked (GlcNAc...) asparagine glycosylation occurs at asparagine 53.

It belongs to the UPF0669 family.

The protein resides in the secreted. Functionally, may be involved in induction of apoptosis in CD4(+) T-cells, but not CD8(+) T-cells or hepatocytes. The chain is UPF0669 protein C6orf120 homolog from Macaca fascicularis (Crab-eating macaque).